A 176-amino-acid chain; its full sequence is ATP-dependent protease subunit HslV (176 aa).

The active site involves Thr-6. Na(+)-binding residues include Gly-161, Cys-164, and Thr-167.

This sequence belongs to the peptidase T1B family. HslV subfamily. A double ring-shaped homohexamer of HslV is capped on each side by a ring-shaped HslU homohexamer. The assembly of the HslU/HslV complex is dependent on binding of ATP.

The protein resides in the cytoplasm. The catalysed reaction is ATP-dependent cleavage of peptide bonds with broad specificity.. With respect to regulation, allosterically activated by HslU binding. Protease subunit of a proteasome-like degradation complex believed to be a general protein degrading machinery. In Thermotoga sp. (strain RQ2), this protein is ATP-dependent protease subunit HslV.